The following is a 360-amino-acid chain: Ribosomal RNA small subunit methyltransferase C (360 aa).

This sequence belongs to the methyltransferase superfamily. RsmC family. Monomer.

The protein resides in the cytoplasm. It catalyses the reaction guanosine(1207) in 16S rRNA + S-adenosyl-L-methionine = N(2)-methylguanosine(1207) in 16S rRNA + S-adenosyl-L-homocysteine + H(+). In terms of biological role, specifically methylates the guanine in position 1207 of 16S rRNA in the 30S particle. The sequence is that of Ribosomal RNA small subunit methyltransferase C from Alteromonas mediterranea (strain DSM 17117 / CIP 110805 / LMG 28347 / Deep ecotype).